Consider the following 309-residue polypeptide: Porphobilinogen deaminase (309 aa).

Position 242 is an S-(dipyrrolylmethanemethyl)cysteine (C242).

This sequence belongs to the HMBS family. In terms of assembly, monomer. Requires dipyrromethane as cofactor.

It carries out the reaction 4 porphobilinogen + H2O = hydroxymethylbilane + 4 NH4(+). It functions in the pathway porphyrin-containing compound metabolism; protoporphyrin-IX biosynthesis; coproporphyrinogen-III from 5-aminolevulinate: step 2/4. In terms of biological role, tetrapolymerization of the monopyrrole PBG into the hydroxymethylbilane pre-uroporphyrinogen in several discrete steps. This chain is Porphobilinogen deaminase, found in Shewanella frigidimarina (strain NCIMB 400).